Reading from the N-terminus, the 104-residue chain is Large ribosomal subunit protein uL24 (104 aa).

Belongs to the universal ribosomal protein uL24 family. Part of the 50S ribosomal subunit.

Functionally, one of two assembly initiator proteins, it binds directly to the 5'-end of the 23S rRNA, where it nucleates assembly of the 50S subunit. In terms of biological role, one of the proteins that surrounds the polypeptide exit tunnel on the outside of the subunit. The chain is Large ribosomal subunit protein uL24 from Azotobacter vinelandii (strain DJ / ATCC BAA-1303).